A 689-amino-acid polypeptide reads, in one-letter code: Methionine--tRNA ligase (689 aa).

The short motif at 15–25 (PYANGPIHLGH) is the 'HIGH' region element. Zn(2+) contacts are provided by cysteine 146, cysteine 149, cysteine 159, and cysteine 162. A 'KMSKS' region motif is present at residues 332–336 (KMSKS). An ATP-binding site is contributed by lysine 335. Residues 588–689 (DFAKIDLRIA…EGAQPGMRVK (102 aa)) enclose the tRNA-binding domain.

The protein belongs to the class-I aminoacyl-tRNA synthetase family. MetG type 1 subfamily. In terms of assembly, homodimer. Requires Zn(2+) as cofactor.

The protein localises to the cytoplasm. The enzyme catalyses tRNA(Met) + L-methionine + ATP = L-methionyl-tRNA(Met) + AMP + diphosphate. Is required not only for elongation of protein synthesis but also for the initiation of all mRNA translation through initiator tRNA(fMet) aminoacylation. In Shewanella baltica (strain OS155 / ATCC BAA-1091), this protein is Methionine--tRNA ligase.